The sequence spans 368 residues: Protein-glutamate methylesterase/protein-glutamine glutaminase 1 (368 aa).

Residues 4–121 (KVLVVDDSGF…SRNPDKVRQL (118 aa)) enclose the Response regulatory domain. Position 55 is a 4-aspartylphosphate (aspartate 55). Residues 138–176 (SLPPLPSATSSSHAPASSSSVGASARVGAGASPAPASTS) form a disordered region. Residues 144-176 (SATSSSHAPASSSSVGASARVGAGASPAPASTS) are compositionally biased toward low complexity. Positions 172-368 (PASTSAAPKR…IGRHLVEACQ (197 aa)) constitute a CheB-type methylesterase domain. Residues serine 192, histidine 219, and aspartate 312 contribute to the active site.

This sequence belongs to the CheB family. Phosphorylated by CheA. Phosphorylation of the N-terminal regulatory domain activates the methylesterase activity.

Its subcellular location is the cytoplasm. It catalyses the reaction [protein]-L-glutamate 5-O-methyl ester + H2O = L-glutamyl-[protein] + methanol + H(+). The enzyme catalyses L-glutaminyl-[protein] + H2O = L-glutamyl-[protein] + NH4(+). Its function is as follows. Involved in chemotaxis. Part of a chemotaxis signal transduction system that modulates chemotaxis in response to various stimuli. Catalyzes the demethylation of specific methylglutamate residues introduced into the chemoreceptors (methyl-accepting chemotaxis proteins or MCP) by CheR. Also mediates the irreversible deamidation of specific glutamine residues to glutamic acid. This is Protein-glutamate methylesterase/protein-glutamine glutaminase 1 from Pseudomonas aeruginosa (strain ATCC 15692 / DSM 22644 / CIP 104116 / JCM 14847 / LMG 12228 / 1C / PRS 101 / PAO1).